Reading from the N-terminus, the 189-residue chain is Peptidyl-tRNA hydrolase (189 aa).

Y15 is a binding site for tRNA. H20 acts as the Proton acceptor in catalysis. Residues F64 and N66 each contribute to the tRNA site.

The protein belongs to the PTH family. Monomer.

It localises to the cytoplasm. The enzyme catalyses an N-acyl-L-alpha-aminoacyl-tRNA + H2O = an N-acyl-L-amino acid + a tRNA + H(+). In terms of biological role, hydrolyzes ribosome-free peptidyl-tRNAs (with 1 or more amino acids incorporated), which drop off the ribosome during protein synthesis, or as a result of ribosome stalling. Functionally, catalyzes the release of premature peptidyl moieties from peptidyl-tRNA molecules trapped in stalled 50S ribosomal subunits, and thus maintains levels of free tRNAs and 50S ribosomes. The protein is Peptidyl-tRNA hydrolase of Persephonella marina (strain DSM 14350 / EX-H1).